The sequence spans 162 residues: Caveolin-2 (162 aa).

Topologically, residues 1-86 (MGLETEKADV…FEVSKYVIYK (86 aa)) are cytoplasmic. Tyrosine 19 bears the Phosphotyrosine; by SRC mark. Serine 20 and serine 23 each carry phosphoserine. Tyrosine 27 carries the phosphotyrosine; by SRC modification. Residues 87-107 (FLTLFLAIPLAFAAGILFATL) constitute an intramembrane region (helical). Topologically, residues 108–162 (SCLHIWIVMPFVKTCLMVLPSVQTIWKSVTDVVIAPLCASVGRSFSSVSMQLSRD) are cytoplasmic.

Belongs to the caveolin family. In terms of assembly, monomer or homodimer. Interacts with CAV1; the interaction forms a stable heterooligomeric complex that is required for targeting to lipid rafts and for caveolae formation. Tyrosine phosphorylated forms do not form heterooligomers with the Tyr-19-phosphorylated form existing as a monomer or dimer, and the Tyr-27-form as a monomer only. Interacts (tyrosine phosphorylated form) with the SH2 domain-containing proteins, RASA1, NCK1 and SRC. Interacts (tyrosine phosphorylated form) with INSR, the interaction (Tyr-27-phosphorylated form) is increased on insulin stimulation. Interacts (Tyr-19 phosphorylated form) with MAPK1 (phosphorylated form); the interaction, promoted by insulin, leads to nuclear location and MAPK1 activation. Interacts with STAT3; the interaction is increased on insulin-induced tyrosine phosphorylation leading to STAT activation. Phosphorylated on serine and tyrosine residues. CAV1 promotes phosphorylation on Ser-23 which then targets the complex to the plasma membrane, lipid rafts and caveolae. Phosphorylation on both Tyr-19 and Tyr-27 is required for insulin-induced 'Ser-727' phosphorylation of STAT3 and its activation. Phosphorylation on Tyr-19 is required for insulin-induced phosphorylation of MAPK1 and DNA binding of STAT3. Tyrosine phosphorylation is induced by both EGF and insulin.

The protein localises to the nucleus. The protein resides in the cytoplasm. It localises to the golgi apparatus membrane. It is found in the cell membrane. Its subcellular location is the membrane. The protein localises to the caveola. May act as a scaffolding protein within caveolar membranes. Interacts directly with G-protein alpha subunits and can functionally regulate their activity. Acts as an accessory protein in conjunction with CAV1 in targeting to lipid rafts and driving caveolae formation. Positive regulator of cellular mitogenesis of the MAPK signaling pathway. Required for the insulin-stimulated nuclear translocation and activation of MAPK1 and STAT3, and the subsequent regulation of cell cycle progression. The chain is Caveolin-2 (CAV2) from Rhinolophus ferrumequinum (Greater horseshoe bat).